The sequence spans 355 residues: 3-dehydroquinate synthase (355 aa).

NAD(+) is bound by residues 71-76 (EGEERK), 105-109 (GVVGD), 129-130 (TS), K142, and K151. E184, H246, and H263 together coordinate Zn(2+).

It belongs to the sugar phosphate cyclases superfamily. Dehydroquinate synthase family. NAD(+) is required as a cofactor. Co(2+) serves as cofactor. Requires Zn(2+) as cofactor.

Its subcellular location is the cytoplasm. The enzyme catalyses 7-phospho-2-dehydro-3-deoxy-D-arabino-heptonate = 3-dehydroquinate + phosphate. Its pathway is metabolic intermediate biosynthesis; chorismate biosynthesis; chorismate from D-erythrose 4-phosphate and phosphoenolpyruvate: step 2/7. Its function is as follows. Catalyzes the conversion of 3-deoxy-D-arabino-heptulosonate 7-phosphate (DAHP) to dehydroquinate (DHQ). The chain is 3-dehydroquinate synthase from Streptococcus pneumoniae (strain ATCC BAA-255 / R6).